A 113-amino-acid polypeptide reads, in one-letter code: UPF0122 protein SSU98_0878 (113 aa).

Belongs to the UPF0122 family.

In terms of biological role, might take part in the signal recognition particle (SRP) pathway. This is inferred from the conservation of its genetic proximity to ftsY/ffh. May be a regulatory protein. The polypeptide is UPF0122 protein SSU98_0878 (Streptococcus suis (strain 98HAH33)).